The primary structure comprises 1080 residues: Carbamoyl phosphate synthase large chain (1080 aa).

Residues 1-403 (MPKRTDLKTI…SLQKALRGLE (403 aa)) are carboxyphosphate synthetic domain. ATP is bound by residues Arg-129, Arg-169, Gly-175, Gly-176, Glu-208, Val-210, Glu-215, Gly-241, Val-242, His-243, Gln-285, and Glu-299. The region spanning 133–328 (RVAMGEIGLD…IAKVAAKLAV (196 aa)) is the ATP-grasp 1 domain. Mg(2+)-binding residues include Gln-285, Glu-299, and Asn-301. 3 residues coordinate Mn(2+): Gln-285, Glu-299, and Asn-301. The oligomerization domain stretch occupies residues 404-554 (TGKIGLDPTG…YSTYEDECEA (151 aa)). Residues 555–942 (LPSNRDKIMI…AFARAQEAGG (388 aa)) form a carbamoyl phosphate synthetic domain region. One can recognise an ATP-grasp 2 domain in the interval 679-876 (QQLVDKLGLK…LAKIAARCMA (198 aa)). 10 residues coordinate ATP: Arg-715, Arg-754, Leu-756, Glu-761, Gly-787, Val-788, His-789, Ser-790, Gln-830, and Glu-847. Mg(2+) is bound by residues Gln-830, Glu-847, and Asn-849. Residues Gln-830, Glu-847, and Asn-849 each coordinate Mn(2+). The region spanning 943-1080 (IKAPPLGKAF…LQELHKELEA (138 aa)) is the MGS-like domain. The allosteric domain stretch occupies residues 943–1080 (IKAPPLGKAF…LQELHKELEA (138 aa)).

It belongs to the CarB family. Composed of two chains; the small (or glutamine) chain promotes the hydrolysis of glutamine to ammonia, which is used by the large (or ammonia) chain to synthesize carbamoyl phosphate. Tetramer of heterodimers (alpha,beta)4. It depends on Mg(2+) as a cofactor. Requires Mn(2+) as cofactor.

The catalysed reaction is hydrogencarbonate + L-glutamine + 2 ATP + H2O = carbamoyl phosphate + L-glutamate + 2 ADP + phosphate + 2 H(+). It catalyses the reaction hydrogencarbonate + NH4(+) + 2 ATP = carbamoyl phosphate + 2 ADP + phosphate + 2 H(+). Its pathway is amino-acid biosynthesis; L-arginine biosynthesis; carbamoyl phosphate from bicarbonate: step 1/1. The protein operates within pyrimidine metabolism; UMP biosynthesis via de novo pathway; (S)-dihydroorotate from bicarbonate: step 1/3. In terms of biological role, large subunit of the glutamine-dependent carbamoyl phosphate synthetase (CPSase). CPSase catalyzes the formation of carbamoyl phosphate from the ammonia moiety of glutamine, carbonate, and phosphate donated by ATP, constituting the first step of 2 biosynthetic pathways, one leading to arginine and/or urea and the other to pyrimidine nucleotides. The large subunit (synthetase) binds the substrates ammonia (free or transferred from glutamine from the small subunit), hydrogencarbonate and ATP and carries out an ATP-coupled ligase reaction, activating hydrogencarbonate by forming carboxy phosphate which reacts with ammonia to form carbamoyl phosphate. The sequence is that of Carbamoyl phosphate synthase large chain from Xanthomonas campestris pv. campestris (strain ATCC 33913 / DSM 3586 / NCPPB 528 / LMG 568 / P 25).